A 299-amino-acid chain; its full sequence is tRNA-cytidine(32) 2-sulfurtransferase (299 aa).

The PP-loop motif signature appears at 49-54; that stretch reads SGGKDS. Positions 124, 127, and 215 each coordinate [4Fe-4S] cluster.

Belongs to the TtcA family. Homodimer. Requires Mg(2+) as cofactor. [4Fe-4S] cluster serves as cofactor.

The protein localises to the cytoplasm. The catalysed reaction is cytidine(32) in tRNA + S-sulfanyl-L-cysteinyl-[cysteine desulfurase] + AH2 + ATP = 2-thiocytidine(32) in tRNA + L-cysteinyl-[cysteine desulfurase] + A + AMP + diphosphate + H(+). The protein operates within tRNA modification. Its function is as follows. Catalyzes the ATP-dependent 2-thiolation of cytidine in position 32 of tRNA, to form 2-thiocytidine (s(2)C32). The sulfur atoms are provided by the cysteine/cysteine desulfurase (IscS) system. In Deinococcus radiodurans (strain ATCC 13939 / DSM 20539 / JCM 16871 / CCUG 27074 / LMG 4051 / NBRC 15346 / NCIMB 9279 / VKM B-1422 / R1), this protein is tRNA-cytidine(32) 2-sulfurtransferase.